The following is a 990-amino-acid chain: MPTDNENSMTNVEQAEKYWQQFLTAPALTDDDKAIAKQHHDVLLTAFARSSFLAETIIQKPSFVSRTVEQTVEQTVEQTTEQDSDEQLQKNVDKEASSPWVAMYRSALDITLETVKTEDDLLKALREYRNQEMARVTFLDVLNKQDISTSLERVSALADVLLTGAYHWIYQHLAIRYGTPQNNGEDMHMYILGMGKLGGKELNFSSDIDLIFSYPEKGETQGGRKSIEHQQFFTKLAQKLIQALNKITNDGQVYRVDMRLRPFGDSGPLVMHFAALEDYYQDQGRHWERFAMVKARVINDDNSEDVKWLNSILHPFTFRRYLDFTTLDALRNMKKLIATEIRRRRLNNNIKLGAGGIREVEFFAQSFQLIHGGREPALQSKSLLRTLDALTELDIVEKDVTEQLKHDYLFLRKVEHTLQQCQDRQTQTLPDSAWQQAALIEVMGFDSYSTFLNQLDATMARIHGHFNELVEESQDSHSDEDQLFIACQDAWRLSLQEEEFAETFSEHLSSKDITGVYPILVAFKDKQRNYRIGQKGEDTLNKLLPEILYVLINQHPNHISQVLKRLLGVIEAITGRTTYLDLLLENPDVLKQLVKLCERSDWIAQEIKRFPLLLDELLTPLYLGQQNTDIHTSKKEYQLELRETMLRIEQDDVEMLMDGLRQFKLCQQLRIAASDISESLPVNNVSDKLTVLAEVILEHVVNAAWMQMRQRYGVPSHLEGNDKGFAVIGYGKLGGYELGYGSDLDLVFLHNAPRGISTDGNKSLEAQQFYIKLAQRIMHLLNTKTLFGQLYETDLRLRPSGNAGLLCCHIDGFEKYQTEEAWTWEHQALVRARAICGDVGLLKDFTRVRHTILSQVRDSKSLATDVCKMRLKMREHLLSKNNDKVDLKQCVGGITDIEFMAQYLVLANAQSADSMTTYPDNLRIFDTAVKARIIDPSTASKLQKAYLKLREQYHHLTLADTKYADQSEELDAIREQVRQHWDTLFGTCSE.

The segment at 1–474 (MPTDNENSMT…HFNELVEESQ (474 aa)) is adenylyl removase. An adenylyl transferase region spans residues 484 to 990 (FIACQDAWRL…WDTLFGTCSE (507 aa)).

It belongs to the GlnE family. The cofactor is Mg(2+).

The catalysed reaction is [glutamine synthetase]-O(4)-(5'-adenylyl)-L-tyrosine + phosphate = [glutamine synthetase]-L-tyrosine + ADP. It catalyses the reaction [glutamine synthetase]-L-tyrosine + ATP = [glutamine synthetase]-O(4)-(5'-adenylyl)-L-tyrosine + diphosphate. Its function is as follows. Involved in the regulation of glutamine synthetase GlnA, a key enzyme in the process to assimilate ammonia. When cellular nitrogen levels are high, the C-terminal adenylyl transferase (AT) inactivates GlnA by covalent transfer of an adenylyl group from ATP to specific tyrosine residue of GlnA, thus reducing its activity. Conversely, when nitrogen levels are low, the N-terminal adenylyl removase (AR) activates GlnA by removing the adenylyl group by phosphorolysis, increasing its activity. The regulatory region of GlnE binds the signal transduction protein PII (GlnB) which indicates the nitrogen status of the cell. The protein is Bifunctional glutamine synthetase adenylyltransferase/adenylyl-removing enzyme of Alteromonas mediterranea (strain DSM 17117 / CIP 110805 / LMG 28347 / Deep ecotype).